Here is a 305-residue protein sequence, read N- to C-terminus: RxLR effector protein 17 (305 aa).

A signal peptide spans 1-24 (MQSILWFALIASVVFLVLVDLASG). A RxLR-dEER motif is present at residues 45 to 60 (RLLRAAHLDRKLSEER). N-linked (GlcNAc...) asparagine glycosylation is found at N207 and N227. The segment at 247-269 (LHLKWAVEAKSPKDVVERILKDL) is w motif.

The protein belongs to the RxLR effector family. In terms of assembly, interacts with host A.thaliana At1G14340.

The protein resides in the secreted. Its subcellular location is the host cell membrane. Its function is as follows. Secreted effector that confers enhanced plant susceptibility during both compatible and incompatible interactions between the pathogen and its host. Promotes the sexual reproduction of the pathogen in the plant host. This Hyaloperonospora arabidopsidis (strain Emoy2) (Downy mildew agent) protein is RxLR effector protein 17.